The primary structure comprises 199 residues: dITP/XTP pyrophosphatase (199 aa).

Residue Ser8–Lys13 participates in substrate binding. Asp69 (proton acceptor) is an active-site residue. Asp69 serves as a coordination point for Mg(2+). Substrate is bound by residues Ser70, Phe154–Asn157, Lys177, and His182–Arg183.

This sequence belongs to the HAM1 NTPase family. Homodimer. It depends on Mg(2+) as a cofactor.

The enzyme catalyses XTP + H2O = XMP + diphosphate + H(+). It carries out the reaction dITP + H2O = dIMP + diphosphate + H(+). It catalyses the reaction ITP + H2O = IMP + diphosphate + H(+). Its function is as follows. Pyrophosphatase that catalyzes the hydrolysis of nucleoside triphosphates to their monophosphate derivatives, with a high preference for the non-canonical purine nucleotides XTP (xanthosine triphosphate), dITP (deoxyinosine triphosphate) and ITP. Seems to function as a house-cleaning enzyme that removes non-canonical purine nucleotides from the nucleotide pool, thus preventing their incorporation into DNA/RNA and avoiding chromosomal lesions. The protein is dITP/XTP pyrophosphatase of Xanthomonas oryzae pv. oryzae (strain KACC10331 / KXO85).